A 523-amino-acid chain; its full sequence is DELLA protein RGL3 (523 aa).

The segment at 1–28 (MKRSHQETSVEEEAPSMVEKLENGCGGG) is disordered. The short motif at 34-38 (DEFLA) is the DELLA motif element. The short motif at 56–60 (LEQLE) is the LEXLE motif element. Positions 78 to 82 (VHYNP) match the VHYNP motif motif. Positions 148 to 516 (VLIEETGVRL…KPLIAASAWK (369 aa)) constitute a GRAS domain. The leucine repeat I (LRI) stretch occupies residues 155–209 (VRLVQALVACAEAVQLENLSLADALVKRVGLLAASQAGAMGKVATYFAEALARRI). The VHIID stretch occupies residues 228 to 293 (QMNFYDSCPY…GGPPSFRLTG (66 aa)). The VHIID motif lies at 259-263 (VHVID). The segment at 305–337 (ELGWKLAQLAQAIGVEFKFNGLTTERLSDLEPD) is leucine repeat II (LRII). Residues 348–437 (LVVNSVFELH…EVYLGRQILN (90 aa)) are PFYRE. An LXXLL motif motif is present at residues 356 to 360 (LHPVL). The SAW stretch occupies residues 440–516 (ATEGSDRIER…KPLIAASAWK (77 aa)).

This sequence belongs to the GRAS family. DELLA subfamily. As to quaternary structure, interacts directly with the GID2/SLY1 component of the SCF(GID2) complex, suggesting that it may be ubiquitinated. Interacts (via N-terminus) with GID1A, GID1B and GID1B (via N-terminus). Interacts with the BOI proteins BOI, BRG1, BRG2 and BRG3. Post-translationally, phosphorylated. May be ubiquitinated. As to expression, expressed at very low level. Mainly expressed in germinating seeds and flowers and siliques. Not expressed in other tissues.

The protein localises to the nucleus. Probable transcriptional regulator that acts as a repressor of the gibberellin (GA) signaling pathway. No effect of the BOI proteins on its stability. Probably acts by participating in large multiprotein complexes that repress transcription of GA-inducible genes. Its activity may be regulated by phytohormones such as auxin and ethylene. This is DELLA protein RGL3 (RGL3) from Arabidopsis thaliana (Mouse-ear cress).